Consider the following 466-residue polypeptide: MALLTAAARLLGTKNASCLVLAARHASASSTNLKDILADLIPKEQARIKTFRQQHGKTVVGQITVDMMYGGMRGMKGLVYETSVLDPDEGIRFRGFSIPECQKLLPKAKGGEEPLPEGLFWLLVTGQIPTEEQVSWLSKEWAKRAALPSHVVTMLDNFPTNLHPMSQLSAAVTALNSESNFARAYAEGISRTKYWELIYEDSMDLIAKLPCIAAKIYRNLYREGSGIGAIDSNLDWSHNFTNMLGYTDSQFTELMRLYLTIHSDHEGGNVSAHTSHLVGSALSDPYLSFAAAMNGLAGPLHGLANQEVLVWLTQLQKEVGKDVSDEKLRDYIWNTLNSGRVVPGYGHAVLRKTDPRYTCQREFALKHLPNDPMFKLVAQLYKIVPNVLLEQGKAKNPWPNVDAHSGVLLQYYGMTEMNYYTVLFGVSRALGVLAQLIWSRALGFPLERPKSMSTEGLMKFVDSKSG.

Residues 1 to 27 constitute a mitochondrion transit peptide; it reads MALLTAAARLLGTKNASCLVLAARHAS. Positions 2–21 match the SIFI-degron motif; that stretch reads ALLTAAARLLGTKNASCLVL. Lys57 carries the post-translational modification N6-succinyllysine. Lys76 is modified (N6-acetyllysine; alternate). At Lys76 the chain carries N6-succinyllysine; alternate. Residues Lys103 and Lys193 each carry the N6-succinyllysine modification. His301 is an active-site residue. Residues Lys321 and Lys327 each carry the N6-acetyllysine; alternate modification. Lys321 and Lys327 each carry N6-succinyllysine; alternate. Residue His347 is part of the active site. Arg356 contributes to the oxaloacetate binding site. Lys375 is modified (N6-acetyllysine; alternate). An N6-succinyllysine; alternate modification is found at Lys375. Residue Lys382 is modified to N6-acetyllysine. Lys393 carries the post-translational modification N6-acetyllysine; alternate. An N6-succinyllysine; alternate modification is found at Lys393. Lys395 bears the N6,N6,N6-trimethyllysine mark. The active site involves Asp402. Residues Arg428 and Arg448 each coordinate oxaloacetate. The residue at position 450 (Lys450) is an N6-succinyllysine. Position 459 is an N6-acetyllysine; alternate (Lys459). Lys459 carries the N6-succinyllysine; alternate modification.

The protein belongs to the citrate synthase family. In terms of assembly, homodimer. In terms of processing, methylated. Trimethylation at Lys-395 by CSKMT decreases citrate synthase activity. In response to mitochondrial stress, the precursor protein is ubiquitinated by the SIFI complex in the cytoplasm before mitochondrial import, leading to its degradation. Within the SIFI complex, UBR4 initiates ubiquitin chain that are further elongated or branched by KCMF1.

It is found in the mitochondrion matrix. The catalysed reaction is oxaloacetate + acetyl-CoA + H2O = citrate + CoA + H(+). It participates in carbohydrate metabolism; tricarboxylic acid cycle; isocitrate from oxaloacetate: step 1/2. Functionally, key enzyme of the Krebs tricarboxylic acid cycle which catalyzes the synthesis of citrate from acetyl coenzyme A and oxaloacetate. The sequence is that of Citrate synthase, mitochondrial (CS) from Macaca fascicularis (Crab-eating macaque).